We begin with the raw amino-acid sequence, 176 residues long: NAD(P)H-quinone oxidoreductase subunit 6, chloroplastic (176 aa).

A run of 5 helical transmembrane segments spans residues 10–30, 33–53, 61–81, 92–112, and 152–172; these read FLLVFFGSGLILGGLGVILFT, IFSAFSLGLVLVCISLFYIIA, AQLLIYVGAINVLIIFAVMFI, LFTLGDGMTLVICTGIFFLLI, and FFPPFELISIILLVALIGAIA.

It belongs to the complex I subunit 6 family. NDH is composed of at least 16 different subunits, 5 of which are encoded in the nucleus.

The protein localises to the plastid. It is found in the chloroplast thylakoid membrane. The enzyme catalyses a plastoquinone + NADH + (n+1) H(+)(in) = a plastoquinol + NAD(+) + n H(+)(out). The catalysed reaction is a plastoquinone + NADPH + (n+1) H(+)(in) = a plastoquinol + NADP(+) + n H(+)(out). Functionally, NDH shuttles electrons from NAD(P)H:plastoquinone, via FMN and iron-sulfur (Fe-S) centers, to quinones in the photosynthetic chain and possibly in a chloroplast respiratory chain. The immediate electron acceptor for the enzyme in this species is believed to be plastoquinone. Couples the redox reaction to proton translocation, and thus conserves the redox energy in a proton gradient. This chain is NAD(P)H-quinone oxidoreductase subunit 6, chloroplastic (ndhG), found in Fagopyrum esculentum subsp. ancestrale (Wild buckwheat).